The chain runs to 337 residues: Mortality factor related protein 1 (337 aa).

The Tudor-knot domain occupies 7 to 55; sequence FEVGENVACIYKGKPYDAKITDIKTNSDGKELYCVHFKGWNNRYDEKIP. Residues 75–113 are disordered; that stretch reads HNAELPTTALKPKKKSLAAEAPRDDRDDTPGTSKGKKAK. Positions 122–327 constitute an MRG domain; the sequence is TADDMKVELP…ASNDYYRRSL (206 aa).

Component of the SIN3S complex, which contains at least sin-3, hda-1, athp-1 and mrg-1. Interacts with cfp-1, a component of the SET2 complex. Interacts with rfp-1. As to expression, expressed in oocytes (at protein level). Expressed mainly in germ cells, but also at lower levels in several somatic cell types, including intestinal cells.

The protein localises to the nucleus. The protein resides in the chromosome. In terms of biological role, protein involved in the remodeling of chromatin thereby regulating various processes including transcription, chromosome synapsis and genome integrity. Mainly binds genomic loci carrying trimethylated histone H3 'Lys-36' (H3K36me3) or 'Lys-4' (H3K4me3), and acetylated histone H3 'Lys-9' (H3K9ac), 'Lys-27' (H3K27ac). During meiosis, required for the presynaptic pairing of homologous chromosomal regions outside of the pairing center and for the progression of chromosome synapsis. Essential maternal factor required in postembryonic germline development and in maintaining germ cell identity. Plays an important role in maintaining genomic integrity in primordial germ cells (PGCs) during meiosis by regulating DNA double-strand break (DSB) repair and synapsis. Also, required for chromatin-based transcriptional silencing in PGCs and for silencing of X-linked genes in the maternal germ line. By retaining histone acetyltransferase, cbp-1, in euchromatin, promotes the anchoring of heterochromatin at the inner nuclear membrane in intestinal and hypodermal cells. This chain is Mortality factor related protein 1, found in Caenorhabditis elegans.